The primary structure comprises 297 residues: Protein BCCIP homolog (297 aa).

The interval 1–40 is disordered; the sequence is MSANKQKKLSTMEVDPNEDVSSSSEDDDDDEPHPDAYKGN.

Belongs to the BCP1 family.

This is Protein BCCIP homolog from Drosophila melanogaster (Fruit fly).